Here is a 524-residue protein sequence, read N- to C-terminus: GMP synthase [glutamine-hydrolyzing] (524 aa).

In terms of domain architecture, Glutamine amidotransferase type-1 spans 5–195 (KVIVIDFGGQ…VRGVCGCAGT (191 aa)). The active-site Nucleophile is the C82. Catalysis depends on residues H169 and E171. Residues 196-389 (WKMDAFVENT…LGIPEHLVFR (194 aa)) form the GMPS ATP-PPase domain. 223–229 (SGGVDSS) is a binding site for ATP.

Homodimer.

The enzyme catalyses XMP + L-glutamine + ATP + H2O = GMP + L-glutamate + AMP + diphosphate + 2 H(+). It functions in the pathway purine metabolism; GMP biosynthesis; GMP from XMP (L-Gln route): step 1/1. Its function is as follows. Catalyzes the synthesis of GMP from XMP. The protein is GMP synthase [glutamine-hydrolyzing] of Lachnospira eligens (strain ATCC 27750 / DSM 3376 / VPI C15-48 / C15-B4) (Eubacterium eligens).